The primary structure comprises 73 residues: Alpha-bungarotoxin N3 (73 aa).

5 cysteine pairs are disulfide-bonded: Cys3/Cys23, Cys16/Cys43, Cys28/Cys32, Cys47/Cys58, and Cys59/Cys64.

Belongs to the three-finger toxin family. Long-chain subfamily. Type II alpha-neurotoxin sub-subfamily. Monomer in solution, homodimer in crystal state. Expressed by the venom gland.

The protein resides in the secreted. Its function is as follows. Binds with high affinity to muscular (alpha-1/CHRNA1) and neuronal (alpha-7/CHRNA7) nicotinic acetylcholine receptor (nAChR) and inhibits acetylcholine from binding to the receptor, thereby impairing neuromuscular and neuronal transmission. Mice injected with this toxin develop flaccid paralysis followed by death. Irreversibly inhibits twitches in a concentration-dependent manner in rat phrenic nerve-hemidiaphragm and chick biventer cervicis muscle. The protein is Alpha-bungarotoxin N3 of Bungarus candidus (Malayan krait).